The sequence spans 187 residues: Probable cobalt-precorrin-6B C(15)-methyltransferase (decarboxylating) (187 aa).

S-adenosyl-L-methionine-binding positions include Thr17, 41–45 (GCGTG), Asp62, and Gly91.

This sequence belongs to the methyltransferase superfamily. Archaeal-type CbiT family.

It carries out the reaction Co-precorrin-6B + S-adenosyl-L-methionine = Co-precorrin-7 + S-adenosyl-L-homocysteine + CO2. Its pathway is cofactor biosynthesis; adenosylcobalamin biosynthesis; cob(II)yrinate a,c-diamide from sirohydrochlorin (anaerobic route): step 8/10. Its function is as follows. Catalyzes the methylation of C-15 in cobalt-precorrin-6B followed by the decarboxylation of C-12 to form cobalt-precorrin-7. This Methanobrevibacter smithii (strain ATCC 35061 / DSM 861 / OCM 144 / PS) protein is Probable cobalt-precorrin-6B C(15)-methyltransferase (decarboxylating).